Consider the following 76-residue polypeptide: MVTPTKHAIGLRSASGVELLAHIGLDTVTFDGTPFSLKVKEGDTVKKGEVLVEFDKAFIEDIEESALHQKIFTVVS.

A PTS EIIA type-1 domain is found at 1–76 (MVTPTKHAIG…LHQKIFTVVS (76 aa)). H22 serves as the catalytic Tele-phosphohistidine intermediate.

It localises to the cytoplasm. In terms of biological role, the phosphoenolpyruvate-dependent sugar phosphotransferase system (PTS), a major carbohydrate active -transport system, catalyzes the phosphorylation of incoming sugar substrates concomitant with their translocation across the cell membrane. The polypeptide is Putative phosphotransferase enzyme IIA component YyzE (yyzE) (Bacillus subtilis (strain 168)).